Reading from the N-terminus, the 560-residue chain is Membrane-bound O-acyltransferase GUP1 (560 aa).

The Extracellular portion of the chain corresponds to 1–43 (MSLISILSPLITSEGLDSRIKPSPKKDASTTTKPSLWKTTEFK). The chain crosses the membrane as a helical span at residues 44-64 (FYYIAFLVVVPLMFYAGLQAS). Residues 65 to 101 (SPENPNYARYERLLSQGWLFGRKVDNSDSQYRFFRDN) lie on the Cytoplasmic side of the membrane. Residues 102 to 122 (FALLSVLMLVHTSIKRIVLYS) form a helical membrane-spanning segment. Residues 123-131 (TNITKLRFD) are Extracellular-facing. Residues 132–152 (LIFGLIFLVAAHGVNSIRILA) form a helical membrane-spanning segment. Residues 153 to 165 (HMLILYAIAHVLK) lie on the Cytoplasmic side of the membrane. A helical transmembrane segment spans residues 166–185 (NFRRIATISIWIYGISTLFI). The Extracellular portion of the chain corresponds to 186-276 (NDNFRAYPFG…AAHPIQDYSL (91 aa)). Residues 277–297 (MNYIAYVTYTPLFIAGPIITF) form a helical membrane-spanning segment. At 298-322 (NDYVYQSKHTLPSINFKFIFYYAVR) the chain is on the cytoplasmic side. A helical transmembrane segment spans residues 323–343 (FVIALLSMEFILHFLHVVAIS). Residues 344 to 352 (KTKAWENDT) are Extracellular-facing. The helical transmembrane segment at 353 to 373 (PFQISMIGLFNLNIIWLKLLI) threads the bilayer. Over 374–432 (PWRLFRLWALLDGIDTPENMIRCVDNNYSSLAFWRAWHRSYNKWVVRYIYIPLGGSKNR) the chain is Cytoplasmic. 2 helical membrane passes run 433–453 (VLTSLAVFSFVAIWHDIELKL) and 454–474 (LLWGWLIVLFLLPEIFATQIF). Histidine 447 is a catalytic residue. At 475-485 (SHYTDAVWYRH) the chain is on the cytoplasmic side. The helical transmembrane segment at 486–506 (VCAVGAVFNIWVMMIANLFGF) threads the bilayer. The Extracellular segment spans residues 507 to 526 (CLGSDGTKKLLSDMFCTVSG). A helical transmembrane segment spans residues 527–547 (FKFVILASVSLFIAVQIMFEI). Residues 548–560 (REEEKRHGIYLKC) lie on the Cytoplasmic side of the membrane.

It belongs to the membrane-bound acyltransferase family. In terms of assembly, interacts with mitochondrial outer membrane voltage-dependent anion channel (VDAC) POR1.

The protein resides in the cell membrane. The protein localises to the endoplasmic reticulum membrane. It is found in the mitochondrion membrane. In terms of biological role, membrane-bound O-acyltransferase involved in the remodeling of glycosylphosphatidylinositol (GPI) anchors. Acts only on GPI-anchored proteins, but not on free GPI lipids. Acts as an acyltransferase for GPI anchors that adds C26 fatty acids to the sn2 position of lyso-PI-containing GPI anchors. PER1 first deacylates, GUP1 subsequently reacylates the anchor lipid, thus replacing a shorter fatty acid (C16:0 or C18:0) by C26:0. Also involved in lipid metabolism, having profound effects on sphingolipid-sterol-ordered domains integrity and assembly. Together with GUP2, has an influence on the chemical composition of the yeast extracellular matrix (yECM) in yeast multicellular aggregates, such as biofilms and colonies. Involved in cell integrity and apoptosis. The chain is Membrane-bound O-acyltransferase GUP1 (GUP1) from Saccharomyces cerevisiae (strain ATCC 204508 / S288c) (Baker's yeast).